A 126-amino-acid chain; its full sequence is MIKEFKEFIARGNVIDLAVGVIIGSAFTAIVKSLTDNLINPLIGIFLGKVDLSNLKFSIGDATFKYGSFLNAIINFFIVAIVVFILVKIINKVVKNEPEEPEEEEVDVSAQYLEEIRDLLKEQAKK.

Helical transmembrane passes span 14–34 (VIDL…VKSL) and 67–87 (GSFL…FILV).

The protein belongs to the MscL family. Homopentamer.

It localises to the cell membrane. In terms of biological role, channel that opens in response to stretch forces in the membrane lipid bilayer. May participate in the regulation of osmotic pressure changes within the cell. The sequence is that of Large-conductance mechanosensitive channel from Lactiplantibacillus plantarum (strain ATCC BAA-793 / NCIMB 8826 / WCFS1) (Lactobacillus plantarum).